Here is a 226-residue protein sequence, read N- to C-terminus: CRISPR-associated endonuclease Cas3-HD (226 aa).

Residues Gly-9–Gly-204 form the HD Cas3-type domain. 4 residues coordinate Mg(2+): Asp-56, His-74, His-101, and His-102.

It belongs to the CRISPR-associated nuclease Cas3-HD family. Monomer. Can form a Cascade complex with Csa5, Cas7, Cas5a, Cas3 and Cas8a2. The cofactor is Mg(2+).

In terms of biological role, CRISPR (clustered regularly interspaced short palindromic repeat), is an adaptive immune system that provides protection against mobile genetic elements (viruses, transposable elements and conjugative plasmids). CRISPR clusters contain sequences complementary to antecedent mobile elements and target invading nucleic acids. CRISPR clusters are transcribed and processed into CRISPR RNA (crRNA). Cas3 plus Cascade participate in CRISPR interference, the third stage of CRISPR immunity. Acts as a ssDNA and ssRNA nuclease, probably with both exo- and endonuclease activities. Activity is higher for DNA than RNA. This Thermoproteus tenax (strain ATCC 35583 / DSM 2078 / JCM 9277 / NBRC 100435 / Kra 1) protein is CRISPR-associated endonuclease Cas3-HD (cas3').